The sequence spans 226 residues: UPF0758 protein PsycPRwf_0491 (226 aa).

Residues 102–224 (SLNRSQVVKD…TLSFAETATA (123 aa)) form the MPN domain. Residues H173, H175, and D186 each coordinate Zn(2+). The JAMM motif signature appears at 173-186 (HNHPNQDATPSAAD).

This sequence belongs to the UPF0758 family.

This Psychrobacter sp. (strain PRwf-1) protein is UPF0758 protein PsycPRwf_0491.